A 92-amino-acid polypeptide reads, in one-letter code: YcgL domain-containing protein Sama_1929 (92 aa).

The 85-residue stretch at 1–85 folds into the YcgL domain; it reads MICAVYKSSR…PKDNLLTQHR (85 aa).

This is YcgL domain-containing protein Sama_1929 from Shewanella amazonensis (strain ATCC BAA-1098 / SB2B).